Consider the following 292-residue polypeptide: 4-hydroxy-tetrahydrodipicolinate synthase (292 aa).

Thr45 lines the pyruvate pocket. Tyr133 (proton donor/acceptor) is an active-site residue. Residue Lys161 is the Schiff-base intermediate with substrate of the active site. Ile203 provides a ligand contact to pyruvate.

It belongs to the DapA family. In terms of assembly, homotetramer; dimer of dimers.

It localises to the cytoplasm. It catalyses the reaction L-aspartate 4-semialdehyde + pyruvate = (2S,4S)-4-hydroxy-2,3,4,5-tetrahydrodipicolinate + H2O + H(+). Its pathway is amino-acid biosynthesis; L-lysine biosynthesis via DAP pathway; (S)-tetrahydrodipicolinate from L-aspartate: step 3/4. In terms of biological role, catalyzes the condensation of (S)-aspartate-beta-semialdehyde [(S)-ASA] and pyruvate to 4-hydroxy-tetrahydrodipicolinate (HTPA). This chain is 4-hydroxy-tetrahydrodipicolinate synthase, found in Dechloromonas aromatica (strain RCB).